Reading from the N-terminus, the 213-residue chain is Pyrrolidone-carboxylate peptidase (213 aa).

Catalysis depends on residues Glu78, Cys141, and His165.

It belongs to the peptidase C15 family. In terms of assembly, homotetramer.

The protein localises to the cytoplasm. The catalysed reaction is Release of an N-terminal pyroglutamyl group from a polypeptide, the second amino acid generally not being Pro.. Functionally, removes 5-oxoproline from various penultimate amino acid residues except L-proline. The polypeptide is Pyrrolidone-carboxylate peptidase (Staphylococcus carnosus (strain TM300)).